The chain runs to 303 residues: UDP-3-O-acyl-N-acetylglucosamine deacetylase (303 aa).

Zn(2+) contacts are provided by histidine 78, histidine 237, and aspartate 241. Histidine 264 (proton donor) is an active-site residue.

This sequence belongs to the LpxC family. The cofactor is Zn(2+).

It catalyses the reaction a UDP-3-O-[(3R)-3-hydroxyacyl]-N-acetyl-alpha-D-glucosamine + H2O = a UDP-3-O-[(3R)-3-hydroxyacyl]-alpha-D-glucosamine + acetate. It functions in the pathway glycolipid biosynthesis; lipid IV(A) biosynthesis; lipid IV(A) from (3R)-3-hydroxytetradecanoyl-[acyl-carrier-protein] and UDP-N-acetyl-alpha-D-glucosamine: step 2/6. Its function is as follows. Catalyzes the hydrolysis of UDP-3-O-myristoyl-N-acetylglucosamine to form UDP-3-O-myristoylglucosamine and acetate, the committed step in lipid A biosynthesis. This is UDP-3-O-acyl-N-acetylglucosamine deacetylase from Pseudomonas savastanoi pv. phaseolicola (strain 1448A / Race 6) (Pseudomonas syringae pv. phaseolicola (strain 1448A / Race 6)).